The chain runs to 553 residues: Serine/threonine-protein kinase WNG2 (553 aa).

Disordered stretches follow at residues 1–20 (MMFP…RLQR) and 88–107 (NREP…GGAE). Residues 1–64 (MMFPAVAAPP…GLSWVSVAVA (64 aa)) form the signal peptide. In terms of domain architecture, Protein kinase spans 125-395 (FKQLRPVDEF…IGEVMEDPFF (271 aa)). ATP is bound at residue K186. The Proton acceptor role is filled by D278. The segment at 432–553 (REKADAAAKA…GFNKEDAQES (122 aa)) is disordered. Low complexity predominate over residues 438–451 (AAKAADNAEVPAAK). 3 stretches are compositionally biased toward basic and acidic residues: residues 465-486 (GDRD…EKGR), 494-524 (EGNH…ENRE), and 531-553 (QREE…AQES).

Belongs to the protein kinase superfamily. STE Ser/Thr protein kinase family. WNG subfamily. Mg(2+) serves as cofactor.

The protein resides in the cytoplasmic granule. It localises to the secreted. It is found in the parasitophorous vacuole lumen. It carries out the reaction L-seryl-[protein] + ATP = O-phospho-L-seryl-[protein] + ADP + H(+). The catalysed reaction is L-threonyl-[protein] + ATP = O-phospho-L-threonyl-[protein] + ADP + H(+). In terms of biological role, probable serine/threonine-protein kinase. This Toxoplasma gondii protein is Serine/threonine-protein kinase WNG2.